Reading from the N-terminus, the 344-residue chain is Phosphoribosylformylglycinamidine cyclo-ligase (344 aa).

Belongs to the AIR synthase family.

Its subcellular location is the cytoplasm. It catalyses the reaction 2-formamido-N(1)-(5-O-phospho-beta-D-ribosyl)acetamidine + ATP = 5-amino-1-(5-phospho-beta-D-ribosyl)imidazole + ADP + phosphate + H(+). Its pathway is purine metabolism; IMP biosynthesis via de novo pathway; 5-amino-1-(5-phospho-D-ribosyl)imidazole from N(2)-formyl-N(1)-(5-phospho-D-ribosyl)glycinamide: step 2/2. The sequence is that of Phosphoribosylformylglycinamidine cyclo-ligase from Neisseria meningitidis serogroup C / serotype 2a (strain ATCC 700532 / DSM 15464 / FAM18).